The sequence spans 431 residues: Serine/threonine-protein kinase Sgk1 (431 aa).

A disordered region spans residues 58-93; that stretch reads LNLTPPQDPELMNSNPSPPPSPSQQINLGPSSNPSA. Residues 81–93 show a composition bias toward polar residues; it reads QQINLGPSSNPSA. Residues 98–355 form the Protein kinase domain; sequence FHFLKVIGKG…FTEIKNHVFF (258 aa). ATP is bound by residues 104-112 and lysine 127; that span reads IGKGSFGKV. The active-site Proton acceptor is the aspartate 222. Residues 356 to 431 enclose the AGC-kinase C-terminal domain; that stretch reads SPINWDDLNA…SYAPSMDSYL (76 aa).

This sequence belongs to the protein kinase superfamily. AGC Ser/Thr protein kinase family.

The protein resides in the cytoplasm. It localises to the nucleus. Its subcellular location is the endoplasmic reticulum. The enzyme catalyses L-seryl-[protein] + ATP = O-phospho-L-seryl-[protein] + ADP + H(+). It carries out the reaction L-threonyl-[protein] + ATP = O-phospho-L-threonyl-[protein] + ADP + H(+). In terms of biological role, protein kinase that may play an important role in cellular stress response. May be involved in the regulation of processes such as cell survival, neuronal excitability and renal sodium excretion. The polypeptide is Serine/threonine-protein kinase Sgk1 (sgk1) (Fundulus heteroclitus (Killifish)).